Here is a 263-residue protein sequence, read N- to C-terminus: Oxygen-evolving enhancer protein 2, chloroplastic (263 aa).

A chloroplast-targeting transit peptide spans 1-78 (MAAASCFHAL…VGTKVSPADA (78 aa)). The span at 14 to 30 (ARSSSSSLQSSSSRLPA) shows a compositional bias: low complexity. The disordered stretch occupies residues 14–34 (ARSSSSSLQSSSSRLPAPIKP).

This sequence belongs to the PsbP family.

It localises to the plastid. It is found in the chloroplast thylakoid membrane. Functionally, may be involved in the regulation of photosystem II. This chain is Oxygen-evolving enhancer protein 2, chloroplastic, found in Helianthus annuus (Common sunflower).